A 224-amino-acid polypeptide reads, in one-letter code: uncharacterized protein (224 aa).

A Matrin-type zinc finger spans residues 11 to 42 (YYCKYCQIFVKDTPFARRSHEQTYKHQDAIKK). Positions 67–80 (ATATTASAVSSELA) are enriched in low complexity. Disordered stretches follow at residues 67–158 (ATAT…RNRE) and 172–224 (VKPK…YDQS). Residues 87-98 (KEHPKLRPSKKK) show a composition bias toward basic residues. Residues 108-122 (TSSTETDTISTTHTS) are compositionally biased toward low complexity. Positions 175–199 (KNLDKVPKLAENEGNKSLESKESNE) are enriched in basic and acidic residues. Over residues 203–216 (VFKKKKSGKLRTKS) the composition is skewed to basic residues.

The protein localises to the nucleus. Its subcellular location is the nucleolus. This is an uncharacterized protein from Schizosaccharomyces pombe (strain 972 / ATCC 24843) (Fission yeast).